Reading from the N-terminus, the 344-residue chain is Methionine import ATP-binding protein MetN 1 (344 aa).

Residues 2 to 241 enclose the ABC transporter domain; that stretch reads IELRNLSQRF…PHHEVTRALI (240 aa). 38 to 45 provides a ligand contact to ATP; it reads GRSGAGKS.

This sequence belongs to the ABC transporter superfamily. Methionine importer (TC 3.A.1.24) family. The complex is composed of two ATP-binding proteins (MetN), two transmembrane proteins (MetI) and a solute-binding protein (MetQ).

The protein localises to the cell inner membrane. It catalyses the reaction L-methionine(out) + ATP + H2O = L-methionine(in) + ADP + phosphate + H(+). It carries out the reaction D-methionine(out) + ATP + H2O = D-methionine(in) + ADP + phosphate + H(+). Functionally, part of the ABC transporter complex MetNIQ involved in methionine import. Responsible for energy coupling to the transport system. This Burkholderia lata (strain ATCC 17760 / DSM 23089 / LMG 22485 / NCIMB 9086 / R18194 / 383) protein is Methionine import ATP-binding protein MetN 1.